Reading from the N-terminus, the 146-residue chain is Hemoglobin subunit beta (146 aa).

Residues 2–146 (HWTAEEKQLI…VAHALARKYH (145 aa)) enclose the Globin domain. 2 residues coordinate heme b: His-63 and His-92.

Belongs to the globin family. As to quaternary structure, heterotetramer of two alpha chains and two beta chains. Red blood cells.

In terms of biological role, involved in oxygen transport from the lung to the various peripheral tissues. This chain is Hemoglobin subunit beta (HBB), found in Chloephaga melanoptera (Andean goose).